Here is a 1059-residue protein sequence, read N- to C-terminus: Pleckstrin homology domain-containing family M member 1 (1059 aa).

Positions 40–182 (TSEDGDANTM…LSFELSYKSA (143 aa)) constitute an RUN domain. Ser218 carries the phosphoserine modification. Disordered stretches follow at residues 218 to 244 (SLDS…RRDR), 272 to 334 (LQEN…TPMF), and 354 to 411 (SEEP…DQGS). Composition is skewed to polar residues over residues 313 to 334 (SKAQ…TPMF) and 392 to 401 (GSTSDQQPSS). Residues Ser430, Ser433, and Ser488 each carry the phosphoserine modification. Residues 536–627 (GLMKLGTVAR…WLDRVREALQ (92 aa)) form the PH 1 domain. An LIR motif is present at residues 634 to 640 (EEEWVNI). Residues 657–1059 (LPPYSALLPE…RKYQEQNTVS (403 aa)) are interaction with RAB7A. The 95-residue stretch at 686–780 (DAIKESLLYL…WRDLVRKVLA (95 aa)) folds into the PH 2 domain. Residues 989–1043 (QHVYHCDLCTQRGFICQICHHQDIIFPFEFDTTVRCAECRTVFHQSCQAVVRKGC) form a Phorbol-ester/DAG-type zinc finger.

Interacts (via N- and C-terminus) with RAB7A (GTP-bound form). Simultaneously interacts with RAB7A and ARL8B; bringing about clustering and fusion of late endosomes and lysosomes. Interacts (via RUN domain) with ARL8B (GTP-bound form); the interaction is required for PLEKHM1 localization to lysosomes and for ARL8B function in delivery and degradation of endocytic and autophagic cargo in lysosomes. PLEKHM1 and PLEKHM2 compete for interaction with ARL8B. Interacts with ARL8A; the interaction is weaker than with ARL8B. Interacts with VPS41, VPS11, VPS18, VPS33A and VPS39; indicative for an association with the HOPS complex; the interactions with, at least, VPS41, VPS11, VPS18 and VPS33A require ARL8B. Interacts with GABARAP, GABARAPL, GABARAPL2, MAP1LC3A, MAP1LC3B and MAP1LC3C. Interacts with PAFAH1B. Interacts (via N- and C-terminus) with NDEL1. Interacts (via C-terminus) with MAP3K7. Interacts (via N- and C-terminus) with FAM98A. Interacts (via C-terminus) with DEF8; this interaction is weak but increased in a RAB7A-dependent manner. May interact with sialyl-lex-positive protein. As to expression, expressed in testis, skeletal muscle, lung, liver, spleen, brain, heart, kidney and bone. Weakly expressed in monocytes (at protein level).

The protein localises to the autolysosome membrane. It is found in the endosome membrane. Its subcellular location is the late endosome membrane. The protein resides in the lysosome membrane. Functionally, acts as a multivalent adapter protein that regulates Rab7-dependent and HOPS complex-dependent fusion events in the endolysosomal system and couples autophagic and the endocytic trafficking pathways. Acts as a dual effector of RAB7A and ARL8B that simultaneously binds these GTPases, bringing about clustering and fusion of late endosomes and lysosomes. Required for late stages of endolysosomal maturation, facilitating both endocytosis-mediated degradation of growth factor receptors and autophagosome clearance. Interaction with Arl8b is a crucial factor in the terminal maturation of autophagosomes and to mediate autophagosome-lysosome fusion. Positively regulates lysosome peripheral distribution and ruffled border formation in osteoclasts. May be involved in negative regulation of endocytic transport from early endosome to late endosome/lysosome implicating its association with Rab7. May have a role in sialyl-lex-mediated transduction of apoptotic signals. Involved in bone resorption. The protein is Pleckstrin homology domain-containing family M member 1 of Rattus norvegicus (Rat).